The following is a 348-amino-acid chain: 3-isopropylmalate dehydrogenase (348 aa).

76–87 (GPKWTDPNNRPE) contacts NAD(+). Positions 94, 104, 132, and 217 each coordinate substrate. Mg(2+)-binding residues include aspartate 217, aspartate 241, and aspartate 245. An NAD(+)-binding site is contributed by 275-287 (GSAPDIAGKNVAN).

It belongs to the isocitrate and isopropylmalate dehydrogenases family. LeuB type 1 subfamily. As to quaternary structure, homodimer. Mg(2+) is required as a cofactor. Requires Mn(2+) as cofactor.

Its subcellular location is the cytoplasm. It carries out the reaction (2R,3S)-3-isopropylmalate + NAD(+) = 4-methyl-2-oxopentanoate + CO2 + NADH. It participates in amino-acid biosynthesis; L-leucine biosynthesis; L-leucine from 3-methyl-2-oxobutanoate: step 3/4. Catalyzes the oxidation of 3-carboxy-2-hydroxy-4-methylpentanoate (3-isopropylmalate) to 3-carboxy-4-methyl-2-oxopentanoate. The product decarboxylates to 4-methyl-2 oxopentanoate. The polypeptide is 3-isopropylmalate dehydrogenase (Staphylococcus aureus (strain NCTC 8325 / PS 47)).